A 191-amino-acid polypeptide reads, in one-letter code: Repressor Rok (191 aa).

Residues 2-43 (FNEREALRLRLEQLNEAEVKVIREYQIERDKIYAKLRELDRN) adopt a coiled-coil conformation. Low complexity predominate over residues 75 to 96 (SYQPQSQQQSVQPQLQSISSLP). A disordered region spans residues 75 to 116 (SYQPQSQQQSVQPQLQSISSLPAGIPDGTTRRRRGTARPGSK). The interval 95 to 191 (LPAGIPDGTT…EIESAESANE (97 aa)) is DNA-binding.

The protein resides in the cytoplasm. Its subcellular location is the nucleoid. Repressor of comK, the master regulator of competence development. Overexpression seems to be lethal. Represses at least 20 genes that specify membrane-localized and secreted proteins, including some that encode products with antibiotic activity. Binds to many AT-rich sites in the chromosome, many of which are known or thought to derive from horizontal gene transfer; helps keep mobile element ICEBs1 quiescent in the genome. Binds to its own promoter and is thus probably autoregulatory. This chain is Repressor Rok, found in Bacillus subtilis (strain 168).